Reading from the N-terminus, the 1058-residue chain is Carbamoyl phosphate synthase large chain (1058 aa).

The interval 1 to 401 (MPKRTDIQKI…SLLKACRSLE (401 aa)) is carboxyphosphate synthetic domain. Positions 129, 169, 175, 176, 208, 210, 215, 241, 242, 243, 284, and 298 each coordinate ATP. An ATP-grasp 1 domain is found at 133–327 (KQLMEELEQP…IAKLAAKIAV (195 aa)). Residues Gln-284, Glu-298, and Asn-300 each contribute to the Mg(2+) site. 3 residues coordinate Mn(2+): Gln-284, Glu-298, and Asn-300. An oligomerization domain region spans residues 402 to 546 (IGVHHNEIPE…YSTYGWENES (145 aa)). The tract at residues 547–929 (IRSDKESVLV…ALYKAFEASY (383 aa)) is carbamoyl phosphate synthetic domain. The ATP-grasp 2 domain maps to 671-861 (EQALKELDIP…MAQVATKLIL (191 aa)). Arg-707, Ser-746, Ile-748, Glu-752, Gly-777, Val-778, His-779, Ser-780, Gln-820, and Glu-832 together coordinate ATP. The Mg(2+) site is built by Gln-820, Glu-832, and Asn-834. The Mn(2+) site is built by Gln-820, Glu-832, and Asn-834. The MGS-like domain maps to 930-1058 (LHLPTFGNVV…ESRSFVTEAI (129 aa)). An allosteric domain region spans residues 930–1058 (LHLPTFGNVV…ESRSFVTEAI (129 aa)).

The protein belongs to the CarB family. In terms of assembly, composed of two chains; the small (or glutamine) chain promotes the hydrolysis of glutamine to ammonia, which is used by the large (or ammonia) chain to synthesize carbamoyl phosphate. Tetramer of heterodimers (alpha,beta)4. Mg(2+) is required as a cofactor. It depends on Mn(2+) as a cofactor.

The enzyme catalyses hydrogencarbonate + L-glutamine + 2 ATP + H2O = carbamoyl phosphate + L-glutamate + 2 ADP + phosphate + 2 H(+). It catalyses the reaction hydrogencarbonate + NH4(+) + 2 ATP = carbamoyl phosphate + 2 ADP + phosphate + 2 H(+). It functions in the pathway amino-acid biosynthesis; L-arginine biosynthesis; carbamoyl phosphate from bicarbonate: step 1/1. It participates in pyrimidine metabolism; UMP biosynthesis via de novo pathway; (S)-dihydroorotate from bicarbonate: step 1/3. In terms of biological role, large subunit of the glutamine-dependent carbamoyl phosphate synthetase (CPSase). CPSase catalyzes the formation of carbamoyl phosphate from the ammonia moiety of glutamine, carbonate, and phosphate donated by ATP, constituting the first step of 2 biosynthetic pathways, one leading to arginine and/or urea and the other to pyrimidine nucleotides. The large subunit (synthetase) binds the substrates ammonia (free or transferred from glutamine from the small subunit), hydrogencarbonate and ATP and carries out an ATP-coupled ligase reaction, activating hydrogencarbonate by forming carboxy phosphate which reacts with ammonia to form carbamoyl phosphate. The protein is Carbamoyl phosphate synthase large chain of Streptococcus pneumoniae (strain 70585).